The chain runs to 85 residues: Large ribosomal subunit protein bL27 (85 aa).

The protein belongs to the bacterial ribosomal protein bL27 family.

The chain is Large ribosomal subunit protein bL27 from Sodalis glossinidius (strain morsitans).